The chain runs to 173 residues: Large ribosomal subunit protein uL10 (173 aa).

Belongs to the universal ribosomal protein uL10 family. As to quaternary structure, part of the ribosomal stalk of the 50S ribosomal subunit. The N-terminus interacts with L11 and the large rRNA to form the base of the stalk. The C-terminus forms an elongated spine to which L12 dimers bind in a sequential fashion forming a multimeric L10(L12)X complex.

In terms of biological role, forms part of the ribosomal stalk, playing a central role in the interaction of the ribosome with GTP-bound translation factors. The protein is Large ribosomal subunit protein uL10 of Cupriavidus necator (strain ATCC 17699 / DSM 428 / KCTC 22496 / NCIMB 10442 / H16 / Stanier 337) (Ralstonia eutropha).